Consider the following 806-residue polypeptide: Centrosomal protein of 85 kDa-like (806 aa).

Disordered regions lie at residues 1–27, 51–89, and 101–146; these read MWGR…AGSD, NNHL…LSFK, and HVMP…SSLD. At serine 15 the chain carries Phosphoserine. Polar residues predominate over residues 60 to 74; that stretch reads TSDSGDTGIGTSCSD. The span at 135–146 shows a compositional bias: basic and acidic residues; the sequence is DHSRGERDSSLD. Phosphoserine is present on serine 207. Residues 308–353 form a disordered region; the sequence is PLEGRTTDDSYSLAPWQQPQTEEFQQGSETPMQVLTGSSRQSYSPP. Residues 322–351 are compositionally biased toward polar residues; the sequence is PWQQPQTEEFQQGSETPMQVLTGSSRQSYS. A coiled-coil region spans residues 442-644; the sequence is QEELEQKLAS…ILEIQSMQGK (203 aa).

This sequence belongs to the CEP85 family.

It localises to the cytoplasm. The protein localises to the cytoskeleton. The protein resides in the microtubule organizing center. Its subcellular location is the centrosome. Functionally, plays an essential role in neuronal cell migration. This is Centrosomal protein of 85 kDa-like from Mus musculus (Mouse).